The primary structure comprises 276 residues: Dermonecrotic toxin LlSicTox-alphaIV2i (276 aa).

The active site involves His5. The Mg(2+) site is built by Glu25 and Asp27. His41 serves as the catalytic Nucleophile. 2 disulfides stabilise this stretch: Cys45–Cys51 and Cys47–Cys193. Asp85 contributes to the Mg(2+) binding site.

The protein belongs to the arthropod phospholipase D family. Class II subfamily. Mg(2+) is required as a cofactor. As to expression, expressed by the venom gland.

Its subcellular location is the secreted. The catalysed reaction is an N-(acyl)-sphingosylphosphocholine = an N-(acyl)-sphingosyl-1,3-cyclic phosphate + choline. It carries out the reaction an N-(acyl)-sphingosylphosphoethanolamine = an N-(acyl)-sphingosyl-1,3-cyclic phosphate + ethanolamine. It catalyses the reaction a 1-acyl-sn-glycero-3-phosphocholine = a 1-acyl-sn-glycero-2,3-cyclic phosphate + choline. The enzyme catalyses a 1-acyl-sn-glycero-3-phosphoethanolamine = a 1-acyl-sn-glycero-2,3-cyclic phosphate + ethanolamine. Dermonecrotic toxins cleave the phosphodiester linkage between the phosphate and headgroup of certain phospholipids (sphingolipid and lysolipid substrates), forming an alcohol (often choline) and a cyclic phosphate. This toxin acts on sphingomyelin (SM). It may also act on ceramide phosphoethanolamine (CPE), lysophosphatidylcholine (LPC) and lysophosphatidylethanolamine (LPE), but not on lysophosphatidylserine (LPS), and lysophosphatidylglycerol (LPG). It acts by transphosphatidylation, releasing exclusively cyclic phosphate products as second products. Induces dermonecrosis, hemolysis, increased vascular permeability, edema, inflammatory response, and platelet aggregation. The sequence is that of Dermonecrotic toxin LlSicTox-alphaIV2i from Loxosceles laeta (South American recluse spider).